Here is a 307-residue protein sequence, read N- to C-terminus: Ninja-family protein 5 (307 aa).

Disordered stretches follow at residues 1-159 (MASR…EHTV) and 173-208 (TAGS…EPQP). A compositionally biased stretch (gly residues) spans 8-30 (GGFGRDGGQAPVGGAGAAPGPGG). Composition is skewed to polar residues over residues 63 to 83 (QRSS…GTSC) and 173 to 183 (TAGSPTPSRPQ).

This sequence belongs to the Ninja family.

It is found in the nucleus. The chain is Ninja-family protein 5 from Zea mays (Maize).